Consider the following 95-residue polypeptide: uncharacterized protein (95 aa).

The chain crosses the membrane as a helical span at residues 12–32; that stretch reads IASLVVSVVVLLIGLILWFFI.

It is found in the cell membrane. This is an uncharacterized protein from Escherichia coli O157:H7.